We begin with the raw amino-acid sequence, 312 residues long: Acetylglutamate kinase (312 aa).

Residues G69–G70, R91, and N191 contribute to the substrate site.

The protein belongs to the acetylglutamate kinase family. ArgB subfamily.

The protein localises to the cytoplasm. It catalyses the reaction N-acetyl-L-glutamate + ATP = N-acetyl-L-glutamyl 5-phosphate + ADP. Its pathway is amino-acid biosynthesis; L-arginine biosynthesis; N(2)-acetyl-L-ornithine from L-glutamate: step 2/4. In terms of biological role, catalyzes the ATP-dependent phosphorylation of N-acetyl-L-glutamate. This Streptomyces griseus subsp. griseus (strain JCM 4626 / CBS 651.72 / NBRC 13350 / KCC S-0626 / ISP 5235) protein is Acetylglutamate kinase.